A 326-amino-acid polypeptide reads, in one-letter code: N-acetyl-gamma-glutamyl-phosphate reductase (326 aa).

Residue Cys-155 is part of the active site.

The protein belongs to the NAGSA dehydrogenase family. Type 1 subfamily.

Its subcellular location is the cytoplasm. It carries out the reaction N-acetyl-L-glutamate 5-semialdehyde + phosphate + NADP(+) = N-acetyl-L-glutamyl 5-phosphate + NADPH + H(+). It participates in amino-acid biosynthesis; L-arginine biosynthesis; N(2)-acetyl-L-ornithine from L-glutamate: step 3/4. Catalyzes the NADPH-dependent reduction of N-acetyl-5-glutamyl phosphate to yield N-acetyl-L-glutamate 5-semialdehyde. In Shewanella baltica (strain OS155 / ATCC BAA-1091), this protein is N-acetyl-gamma-glutamyl-phosphate reductase.